The sequence spans 230 residues: Probable methylthioribulose-1-phosphate dehydratase (230 aa).

Position 87 (Cys87) interacts with substrate. Zn(2+) contacts are provided by His105 and His107. Glu129 serves as the catalytic Proton donor/acceptor. Position 185 (His185) interacts with Zn(2+).

It belongs to the aldolase class II family. MtnB subfamily. Requires Zn(2+) as cofactor.

The protein resides in the cytoplasm. It catalyses the reaction 5-(methylsulfanyl)-D-ribulose 1-phosphate = 5-methylsulfanyl-2,3-dioxopentyl phosphate + H2O. The protein operates within amino-acid biosynthesis; L-methionine biosynthesis via salvage pathway; L-methionine from S-methyl-5-thio-alpha-D-ribose 1-phosphate: step 2/6. Its function is as follows. Catalyzes the dehydration of methylthioribulose-1-phosphate (MTRu-1-P) into 2,3-diketo-5-methylthiopentyl-1-phosphate (DK-MTP-1-P). In Drosophila pseudoobscura pseudoobscura (Fruit fly), this protein is Probable methylthioribulose-1-phosphate dehydratase.